The sequence spans 498 residues: Guanosine-5'-triphosphate,3'-diphosphate pyrophosphatase (498 aa).

This sequence belongs to the GppA/Ppx family. GppA subfamily.

It carries out the reaction guanosine 3'-diphosphate 5'-triphosphate + H2O = guanosine 3',5'-bis(diphosphate) + phosphate + H(+). Its pathway is purine metabolism; ppGpp biosynthesis; ppGpp from GTP: step 2/2. Functionally, catalyzes the conversion of pppGpp to ppGpp. Guanosine pentaphosphate (pppGpp) is a cytoplasmic signaling molecule which together with ppGpp controls the 'stringent response', an adaptive process that allows bacteria to respond to amino acid starvation, resulting in the coordinated regulation of numerous cellular activities. This chain is Guanosine-5'-triphosphate,3'-diphosphate pyrophosphatase, found in Pectobacterium atrosepticum (strain SCRI 1043 / ATCC BAA-672) (Erwinia carotovora subsp. atroseptica).